Here is a 212-residue protein sequence, read N- to C-terminus: Adenylate kinase (212 aa).

10 to 15 is an ATP binding site; the sequence is GAGKGT. An NMP region spans residues 30-59; that stretch reads STGDMFRAAMANQTEMGRLAKSYIDKGELV. Residues threonine 31, arginine 36, 57 to 59, 86 to 89, and glutamine 93 contribute to the AMP site; these read ELV and GYPR. Residues 127 to 159 are LID; that stretch reads GRIINRKTGETFHKVFNPPVDYKEEDYYQREDD. Residues arginine 128 and 137–138 each bind ATP; that span reads TF. Residues arginine 156 and arginine 167 each contribute to the AMP site. Residue glutamine 195 participates in ATP binding.

The protein belongs to the adenylate kinase family. As to quaternary structure, monomer.

The protein localises to the cytoplasm. The enzyme catalyses AMP + ATP = 2 ADP. Its pathway is purine metabolism; AMP biosynthesis via salvage pathway; AMP from ADP: step 1/1. Functionally, catalyzes the reversible transfer of the terminal phosphate group between ATP and AMP. Plays an important role in cellular energy homeostasis and in adenine nucleotide metabolism. This chain is Adenylate kinase, found in Streptococcus pyogenes serotype M5 (strain Manfredo).